The sequence spans 285 residues: Phosphate import ATP-binding protein PstB (285 aa).

The region spanning 22–262 is the ABC transporter domain; that stretch reads MRAVDLTLGF…PQHEETVRYF (241 aa). Position 54–61 (54–61) interacts with ATP; that stretch reads GPTGSGKT. The tract at residues 266–285 is disordered; sequence RPAQGSDRGSSQTAGVAESQ. Residues 272-285 show a composition bias toward polar residues; that stretch reads DRGSSQTAGVAESQ.

The protein belongs to the ABC transporter superfamily. Phosphate importer (TC 3.A.1.7) family. As to quaternary structure, the complex is composed of two ATP-binding proteins (PstB), two transmembrane proteins (PstC and PstA) and a solute-binding protein (PstS).

The protein localises to the cell membrane. It carries out the reaction phosphate(out) + ATP + H2O = ADP + 2 phosphate(in) + H(+). Its function is as follows. Part of the ABC transporter complex PstSACB involved in phosphate import. Responsible for energy coupling to the transport system. The polypeptide is Phosphate import ATP-binding protein PstB (Mycobacterium intracellulare).